Consider the following 75-residue polypeptide: Protein BRICK1 (75 aa).

Residue Ala-2 is modified to N-acetylalanine. Residues Met-41 to Glu-72 adopt a coiled-coil conformation.

It belongs to the BRK1 family. In terms of assembly, homotrimer when in free form. Directly interacts with WASF2. Component of the WAVE1 complex composed of ABI2, CYFIP1 or CYFIP2, BRK1, NCKAP1 and WASF1/WAVE1. Within the complex, a heterodimer containing NCKAP1 and CYFIP1 interacts with a heterotrimer formed by WAVE1, ABI2 and BRK1.

It is found in the cytoplasm. It localises to the cytoskeleton. Its function is as follows. Involved in regulation of actin and microtubule organization. Part of a WAVE complex that activates the Arp2/3 complex. As component of the WAVE1 complex, required for BDNF-NTRK2 endocytic trafficking and signaling from early endosomes. This chain is Protein BRICK1 (BRK1), found in Homo sapiens (Human).